Here is a 550-residue protein sequence, read N- to C-terminus: Arginine--tRNA ligase (550 aa).

The short motif at 130-140 (ANPTGPIHLGG) is the 'HIGH' region element.

The protein belongs to the class-I aminoacyl-tRNA synthetase family. Monomer.

The protein resides in the cytoplasm. The enzyme catalyses tRNA(Arg) + L-arginine + ATP = L-arginyl-tRNA(Arg) + AMP + diphosphate. The polypeptide is Arginine--tRNA ligase (Rhodococcus opacus (strain B4)).